A 782-amino-acid chain; its full sequence is Pyridoxal-dependent decarboxylase domain-containing protein 1 (782 aa).

Positions 26-48 are enriched in basic and acidic residues; the sequence is ILEDNQRPSEEEKDGKKYTRKDI. Disordered regions lie at residues 26–56, 673–695, 702–721, and 726–782; these read ILEDNQRPSEEEKDGKKYTRKDIPGPLQGSG, QTTGLTPPPTPTSAHGKRQAGQK, RNSDAMSETSSISHLEEVES, and PMPE…DSLR. 2 stretches are compositionally biased toward polar residues: residues 703–714 and 747–782; these read NSDAMSETSSIS and AEQSSTPSIVPTETSSEGSQEPSIPSANTAESDSLR.

Belongs to the group II decarboxylase family. Requires pyridoxal 5'-phosphate as cofactor.

The chain is Pyridoxal-dependent decarboxylase domain-containing protein 1 (pdxdc1) from Xenopus laevis (African clawed frog).